The following is a 650-amino-acid chain: Acetyl-coenzyme A synthetase (650 aa).

CoA is bound by residues 190–193, Thr-308, and Asn-332; that span reads RGGR. Residues 384–386, 408–413, Asp-497, and Arg-512 contribute to the ATP site; these read GEP and DTWWQT. Ser-520 is a CoA binding site. Arg-523 contributes to the ATP binding site. Mg(2+) contacts are provided by Val-534, His-536, and Val-539. Arg-581 serves as a coordination point for CoA. Lys-606 is subject to N6-acetyllysine.

This sequence belongs to the ATP-dependent AMP-binding enzyme family. Mg(2+) serves as cofactor. In terms of processing, acetylated. Deacetylation by the SIR2-homolog deacetylase activates the enzyme.

The enzyme catalyses acetate + ATP + CoA = acetyl-CoA + AMP + diphosphate. Its function is as follows. Catalyzes the conversion of acetate into acetyl-CoA (AcCoA), an essential intermediate at the junction of anabolic and catabolic pathways. AcsA undergoes a two-step reaction. In the first half reaction, AcsA combines acetate with ATP to form acetyl-adenylate (AcAMP) intermediate. In the second half reaction, it can then transfer the acetyl group from AcAMP to the sulfhydryl group of CoA, forming the product AcCoA. The sequence is that of Acetyl-coenzyme A synthetase from Bradyrhizobium sp. (strain ORS 278).